The chain runs to 127 residues: MATISKKKKKVKVTPEGAVHIKASFNNIMVTITDLQGNTVSWSSAGKNGFKGSKKNTPYASQITSEAAAKEAYDLGMRHVNVFIKGPGAGRDAAIRALQGAGLDVRTIKDITPLPHNGCRPPKRRRV.

This sequence belongs to the universal ribosomal protein uS11 family. Part of the 30S ribosomal subunit. Interacts with proteins S7 and S18. Binds to IF-3.

In terms of biological role, located on the platform of the 30S subunit, it bridges several disparate RNA helices of the 16S rRNA. Forms part of the Shine-Dalgarno cleft in the 70S ribosome. This is Small ribosomal subunit protein uS11 from Pelodictyon phaeoclathratiforme (strain DSM 5477 / BU-1).